The sequence spans 378 residues: MDSRRKVRSENLYKTYWLYWRLLGVEGDYPFRRLVDFTITSFITILFPVHLILGMYKKPQIQVFRSLHFTSECLFCSYKFFCFRWKLKEIKTIEGLLQDLDSRVESEEERNYFNQNPSRVARMLSKSYLVAAISAIITATVAGLFSTGRNLMYLGWFPYDFQATAAIYWISFSYQAIGSSLLILENLANDSYPPITFCVVSGHVRLLIMRLSRIGHDVKLSSSENTRKLIEGIQDHRKLMKIIRLLRSTLHLSQLGQFLSSGINISITLINILFFAENNFAMLYYAVFFAAMLIELFPSCYYGILMTMEFDKLPYAIFSSNWLKMDKRYNRSLIILMQLTLVPVNIKAGGIVGIDMSAFFATVRMAYSFYTLALSFRV.

Residues 1 to 33 (MDSRRKVRSENLYKTYWLYWRLLGVEGDYPFRR) are Cytoplasmic-facing. A helical membrane pass occupies residues 34-54 (LVDFTITSFITILFPVHLILG). The Extracellular portion of the chain corresponds to 55–62 (MYKKPQIQ). Residues 63-83 (VFRSLHFTSECLFCSYKFFCF) traverse the membrane as a helical segment. Residues 84 to 127 (RWKLKEIKTIEGLLQDLDSRVESEEERNYFNQNPSRVARMLSKS) lie on the Cytoplasmic side of the membrane. The chain crosses the membrane as a helical span at residues 128-148 (YLVAAISAIITATVAGLFSTG). The Extracellular segment spans residues 149 to 163 (RNLMYLGWFPYDFQA). The chain crosses the membrane as a helical span at residues 164-184 (TAAIYWISFSYQAIGSSLLIL). The Cytoplasmic segment spans residues 185–254 (ENLANDSYPP…LLRSTLHLSQ (70 aa)). A helical transmembrane segment spans residues 255 to 275 (LGQFLSSGINISITLINILFF). Residues 276–285 (AENNFAMLYY) are Extracellular-facing. Residues 286 to 306 (AVFFAAMLIELFPSCYYGILM) form a helical membrane-spanning segment. Topologically, residues 307–355 (TMEFDKLPYAIFSSNWLKMDKRYNRSLIILMQLTLVPVNIKAGGIVGID) are cytoplasmic. The chain crosses the membrane as a helical span at residues 356–376 (MSAFFATVRMAYSFYTLALSF). Residues 377–378 (RV) are Extracellular-facing.

Belongs to the insect chemoreceptor superfamily. Heteromeric odorant receptor channel (TC 1.A.69) family. Or2a subfamily. As to quaternary structure, interacts with Orco. Complexes exist early in the endomembrane system in olfactory sensory neurons (OSNs), coupling these complexes to the conserved ciliary trafficking pathway. Expressed in 1-2 cells on the distal edge of the antenna but not the maxillary palp.

Its subcellular location is the cell membrane. Odorant receptor which mediates acceptance or avoidance behavior, depending on its substrates. The odorant receptor repertoire encodes a large collection of odor stimuli that vary widely in identity, intensity, and duration. May form a complex with Orco to form odorant-sensing units, providing sensitive and prolonged odorant signaling and calcium permeability. This Drosophila melanogaster (Fruit fly) protein is Odorant receptor 33a (Or33a).